The sequence spans 321 residues: MSDYLVAALYKFVSLPNYESLREPLIDFCQSREIKGTLLLAAEGINGTVAGTPEAIQALLEELRRQPGLDALEHKESVATEQPFYRLKIKLKKEIVTMGVEGIDPNLVVGTYVAPAEWNALISDPDVTVIDTRNDYEYEIGTFRGAVNPNTQSFRQLPQYVAENLDPNKHKKVAMFCTGGIRCEKSTALMKQMGFEEVYHLQGGILKYLEEVPEGNSLWDGECFVFDNRVSVKHGLEEGSYELCHGCRFPINETDKQSDKYIKGVACPRCYDEQTPEQRSRFLERQKQMELASRKGELHIGDRADIAKSRTTQGAPSADGE.

The Rhodanese domain occupies 123–217 (SDPDVTVIDT…YLEEVPEGNS (95 aa)). Residue Cys177 is the Cysteine persulfide intermediate of the active site. Residues 294 to 308 (RKGELHIGDRADIAK) show a composition bias toward basic and acidic residues. A disordered region spans residues 294–321 (RKGELHIGDRADIAKSRTTQGAPSADGE).

It belongs to the TrhO family.

The enzyme catalyses uridine(34) in tRNA + AH2 + O2 = 5-hydroxyuridine(34) in tRNA + A + H2O. Functionally, catalyzes oxygen-dependent 5-hydroxyuridine (ho5U) modification at position 34 in tRNAs. This Teredinibacter turnerae (strain ATCC 39867 / T7901) protein is tRNA uridine(34) hydroxylase.